The sequence spans 307 residues: Membrane protein insertase YidC 2 (307 aa).

An N-terminal signal peptide occupies residues 1 to 23 (MKLTLNRILFSGLALSILFTLTG). C24 carries the N-palmitoyl cysteine lipid modification. C24 carries S-diacylglycerol cysteine lipidation. Transmembrane regions (helical) follow at residues 58 to 78 (LGYG…ILPL), 135 to 155 (LGGI…AMYF), 179 to 199 (VLTA…MMAV), 209 to 225 (TMMY…SFSL), and 231 to 251 (LYWL…TYLL). The tract at residues 263–307 (YAKNPPKAYQSTSSRKDVTPSQNMEQANLPKKIKSNRNAGKQRKR) is disordered. The span at 271–288 (YQSTSSRKDVTPSQNMEQ) shows a compositional bias: polar residues. Basic residues predominate over residues 293–307 (KKIKSNRNAGKQRKR).

The protein belongs to the OXA1/ALB3/YidC family. Type 2 subfamily.

Its subcellular location is the cell membrane. Its function is as follows. Required for the insertion and/or proper folding and/or complex formation of integral membrane proteins into the membrane. Involved in integration of membrane proteins that insert both dependently and independently of the Sec translocase complex, as well as at least some lipoproteins. The sequence is that of Membrane protein insertase YidC 2 from Streptococcus pyogenes serotype M3 (strain ATCC BAA-595 / MGAS315).